A 372-amino-acid polypeptide reads, in one-letter code: Solute carrier family 35 member F6 (372 aa).

A signal peptide spans 1–18; that stretch reads MAWTKYQLFLAGLMLVTG. 2 helical membrane passes run 48–68 and 89–109; these read FVQA…FYLL and LLFL…YVAL. Residues 105-160 form the EamA domain; that stretch reads MYVALNMTSASSFQMLRGAVIIFTGLFSVAFLDRRLVPSQWLGILITIAGLVVVGL. Asn-110 carries an N-linked (GlcNAc...) asparagine glycan. 7 helical membrane passes run 116-136, 145-165, 176-196, 211-231, 261-281, 293-312, and 320-336; these read SFQM…VAFL, WLGI…DLLS, VITG…QMVL, AVGI…VPMY, LIAL…FSGI, MVLD…ALGW, and ILGF…YNGL. Thr-366 carries the post-translational modification Phosphothreonine.

Belongs to the SLC35F solute transporter family. In terms of assembly, interacts with SLC25A5.

The protein resides in the mitochondrion. It localises to the lysosome membrane. Involved in the maintenance of mitochondrial membrane potential in pancreatic ductal adenocarcinoma (PDAC) cells. Promotes pancreatic ductal adenocarcinoma (PDAC) cell growth. May play a role as a nucleotide-sugar transporter. In Rattus norvegicus (Rat), this protein is Solute carrier family 35 member F6 (Slc35f6).